Here is an 84-residue protein sequence, read N- to C-terminus: U4-theraphotoxin-Hhn1a (84 aa).

The first 22 residues, 1 to 22, serve as a signal peptide directing secretion; sequence MKVTLIAILTCAAVLVLHTTAA. Residues 23–47 constitute a propeptide that is removed on maturation; it reads EELEESQLMEVGMPDTELEAVDEER. 3 disulfide bridges follow: Cys-51–Cys-65, Cys-55–Cys-76, and Cys-70–Cys-81.

It belongs to the neurotoxin 12 (Hwtx-2) family. 02 (Hwtx-2) subfamily. As to expression, expressed by the venom gland.

Its subcellular location is the secreted. Functionally, postsynaptic neurotoxin. This Cyriopagopus hainanus (Chinese bird spider) protein is U4-theraphotoxin-Hhn1a.